Reading from the N-terminus, the 153-residue chain is IAA acetyltransferase (153 aa).

The 150-residue stretch at 4–153 folds into the N-acetyltransferase domain; that stretch reads VTIARESPLQ…PLSLFMEKPL (150 aa).

Its function is as follows. Participates in the tryptophan-dependent indole-3-acetic acid production, which is a phytohormone released by A.brasilense. The sequence is that of IAA acetyltransferase from Azospirillum brasilense.